The chain runs to 192 residues: Xanthine phosphoribosyltransferase (192 aa).

Xanthine is bound by residues leucine 20 and asparagine 27. 128 to 132 (AHGEA) contacts 5-phospho-alpha-D-ribose 1-diphosphate. Lysine 156 is a binding site for xanthine.

The protein belongs to the purine/pyrimidine phosphoribosyltransferase family. Xpt subfamily. Homodimer.

It is found in the cytoplasm. The catalysed reaction is XMP + diphosphate = xanthine + 5-phospho-alpha-D-ribose 1-diphosphate. It functions in the pathway purine metabolism; XMP biosynthesis via salvage pathway; XMP from xanthine: step 1/1. In terms of biological role, converts the preformed base xanthine, a product of nucleic acid breakdown, to xanthosine 5'-monophosphate (XMP), so it can be reused for RNA or DNA synthesis. The chain is Xanthine phosphoribosyltransferase from Lactobacillus johnsonii (strain CNCM I-12250 / La1 / NCC 533).